Reading from the N-terminus, the 246-residue chain is Small ribosomal subunit protein uS3 (246 aa).

The 72-residue stretch at 23-94 (LNEFLTRELA…RIELYAEKVA (72 aa)) folds into the KH type-2 domain. The segment at 201-246 (GPKKPLPDNVSVVEPKEEKIYETPETEYKIPPPSKPLDDLSEAKVL) is disordered. 2 stretches are compositionally biased toward basic and acidic residues: residues 214–228 (EPKE…ETEY) and 236–246 (PLDDLSEAKVL). Residues Thr-223 and Thr-226 each carry the phosphothreonine modification. Position 241 is a phosphoserine (Ser-241).

The protein belongs to the universal ribosomal protein uS3 family. In terms of assembly, interacts with LTV1; the interaction is RNA-independent.

It is found in the cytoplasm. It localises to the nucleus. Functionally, has DNA repair activity directed towards the mutagenic lesions 8-oxoguanine and abasic sites in DNA. It can cleave DNA containing 8-oxoguanine residues efficiently. Also acts as an ap lyase, cleaving phosphodiester bonds via a beta,delta elimination reaction. This is Small ribosomal subunit protein uS3 (RpS3) from Drosophila melanogaster (Fruit fly).